Reading from the N-terminus, the 510-residue chain is Histidine ammonia-lyase (510 aa).

Residues 145 to 147 constitute a cross-link (5-imidazolinone (Ala-Gly)); sequence ASG. Ser146 carries the 2,3-didehydroalanine (Ser) modification.

Belongs to the PAL/histidase family. Contains an active site 4-methylidene-imidazol-5-one (MIO), which is formed autocatalytically by cyclization and dehydration of residues Ala-Ser-Gly.

The protein localises to the cytoplasm. The catalysed reaction is L-histidine = trans-urocanate + NH4(+). The protein operates within amino-acid degradation; L-histidine degradation into L-glutamate; N-formimidoyl-L-glutamate from L-histidine: step 1/3. In Stigmatella aurantiaca, this protein is Histidine ammonia-lyase.